A 141-amino-acid polypeptide reads, in one-letter code: Proteasome maturation protein (141 aa).

Lys39 participates in a covalent cross-link: Glycyl lysine isopeptide (Lys-Gly) (interchain with G-Cter in SUMO2).

It belongs to the POMP/UMP1 family. Constituent of preproteasomes, but not of mature 20S proteasomes. Within the preproteasome, may directly interact with PSMB1/beta6, PSMB4/beta7, PSMB5/beta5, PSMB6/beta1 and PSMB9/beta1i. Interaction with PSMB8/beta5i is controversial. Forms tetramers.

Its subcellular location is the cytoplasm. It localises to the cytosol. It is found in the nucleus. The protein resides in the microsome membrane. Molecular chaperone essential for the assembly of standard proteasomes and immunoproteasomes. Degraded after completion of proteasome maturation. Mediates the association of 20S preproteasome with the endoplasmic reticulum. This chain is Proteasome maturation protein (POMP), found in Bos taurus (Bovine).